A 374-amino-acid polypeptide reads, in one-letter code: PqqA peptide cyclase (374 aa).

Residues 7–222 (VTPPLWLLAE…VADYRQRMGA (216 aa)) form the Radical SAM core domain. Cys-21, Cys-25, and Cys-28 together coordinate [4Fe-4S] cluster.

This sequence belongs to the radical SAM superfamily. PqqE family. Interacts with PqqD. The interaction is necessary for activity of PqqE. [4Fe-4S] cluster is required as a cofactor.

The catalysed reaction is [PQQ precursor protein] + S-adenosyl-L-methionine = E-Y cross-linked-[PQQ precursor protein] + 5'-deoxyadenosine + L-methionine + H(+). It functions in the pathway cofactor biosynthesis; pyrroloquinoline quinone biosynthesis. Its function is as follows. Catalyzes the cross-linking of a glutamate residue and a tyrosine residue in the PqqA protein as part of the biosynthesis of pyrroloquinoline quinone (PQQ). The chain is PqqA peptide cyclase from Kluyvera intermedia (Enterobacter intermedius).